Here is a 506-residue protein sequence, read N- to C-terminus: Maturase K (506 aa).

This sequence belongs to the intron maturase 2 family. MatK subfamily.

It localises to the plastid. It is found in the chloroplast. Functionally, usually encoded in the trnK tRNA gene intron. Probably assists in splicing its own and other chloroplast group II introns. In Arctostaphylos uva-ursi (Bearberry), this protein is Maturase K.